We begin with the raw amino-acid sequence, 98 residues long: Large ribosomal subunit protein bL25 (98 aa).

Positions Met-1–Arg-23 are disordered.

Belongs to the bacterial ribosomal protein bL25 family. As to quaternary structure, part of the 50S ribosomal subunit; part of the 5S rRNA/L5/L18/L25 subcomplex. Contacts the 5S rRNA. Binds to the 5S rRNA independently of L5 and L18.

Functionally, this is one of the proteins that binds to the 5S RNA in the ribosome where it forms part of the central protuberance. This is Large ribosomal subunit protein bL25 from Acinetobacter baumannii (strain ATCC 17978 / DSM 105126 / CIP 53.77 / LMG 1025 / NCDC KC755 / 5377).